The primary structure comprises 775 residues: 5-methyltetrahydropteroyltriglutamate--homocysteine methyltransferase (775 aa).

Residues 16 to 19 (REMK) and K115 contribute to the 5-methyltetrahydropteroyltri-L-glutamate site. Residues 435–437 (IGS) and E488 each bind L-homocysteine. L-methionine-binding positions include 435–437 (IGS) and E488. Residues 519 to 520 (RC) and W565 contribute to the 5-methyltetrahydropteroyltri-L-glutamate site. D603 is a binding site for L-homocysteine. Residue D603 participates in L-methionine binding. E609 contacts 5-methyltetrahydropteroyltri-L-glutamate. Residues H645, C647, and E669 each contribute to the Zn(2+) site. The active-site Proton donor is H698. C730 lines the Zn(2+) pocket.

The protein belongs to the vitamin-B12 independent methionine synthase family. Zn(2+) serves as cofactor.

It catalyses the reaction 5-methyltetrahydropteroyltri-L-glutamate + L-homocysteine = tetrahydropteroyltri-L-glutamate + L-methionine. Its pathway is amino-acid biosynthesis; L-methionine biosynthesis via de novo pathway; L-methionine from L-homocysteine (MetE route): step 1/1. Its function is as follows. Catalyzes the transfer of a methyl group from 5-methyltetrahydrofolate to homocysteine resulting in methionine formation. The protein is 5-methyltetrahydropteroyltriglutamate--homocysteine methyltransferase of Coxiella burnetii (strain RSA 331 / Henzerling II).